The following is a 465-amino-acid chain: Cysteine--tRNA ligase (465 aa).

Cysteine 27 is a binding site for Zn(2+). The short motif at 29–39 is the 'HIGH' region element; sequence PTVYNFFHIGN. Residues cysteine 207, histidine 232, and glutamate 236 each coordinate Zn(2+). The 'KMSKS' region motif lies at 264–268; that stretch reads KMSKS. ATP is bound at residue lysine 267.

This sequence belongs to the class-I aminoacyl-tRNA synthetase family. In terms of assembly, monomer. The cofactor is Zn(2+).

The protein resides in the cytoplasm. The enzyme catalyses tRNA(Cys) + L-cysteine + ATP = L-cysteinyl-tRNA(Cys) + AMP + diphosphate. The polypeptide is Cysteine--tRNA ligase (Clostridium botulinum (strain Kyoto / Type A2)).